The chain runs to 526 residues: Ferrochelatase-2, chloroplastic (526 aa).

This sequence belongs to the ferrochelatase family.

Its subcellular location is the plastid. It localises to the chloroplast. The catalysed reaction is heme b + 2 H(+) = protoporphyrin IX + Fe(2+). Its pathway is porphyrin-containing compound metabolism; protoheme biosynthesis; protoheme from protoporphyrin-IX: step 1/1. Functionally, catalyzes the ferrous insertion into protoporphyrin IX. This Oryza sativa subsp. japonica (Rice) protein is Ferrochelatase-2, chloroplastic.